A 239-amino-acid polypeptide reads, in one-letter code: Lytic polysaccharide monooxygenase-like protein X325 (239 aa).

The signal sequence occupies residues 1 to 24; it reads MVLPSSVSQWAALIALLCAGLANA. His-25 contacts Cu(2+). 6 N-linked (GlcNAc...) asparagine glycosylation sites follow: Asn-41, Asn-56, Asn-79, Asn-117, Asn-150, and Asn-197. 2 cysteine pairs are disulfide-bonded: Cys-71–Cys-176 and Cys-141–Cys-195. Residue Ser-214 is the site of GPI-anchor amidated serine attachment. Residues 215-239 constitute a propeptide, removed in mature form; it reads AAAPKSSLMSVLPVYMVALLSWAMM.

This sequence belongs to the X325 family. It depends on Cu(2+) as a cofactor.

Its subcellular location is the cell membrane. Functionally, lytic polysaccharide monooxygenase-like protein that has diverged to biological functions other than polysaccharide degradation since it does not perform oxidative cleavage of polysaccharides. Acts as a cell surface-bound protein that functions in the copper-accumulation pathway. May also act as the major cell wall sensor that regulates MAP kinase-dependent hyphal anastomosis, the fusion of hyphal cells. In Aspergillus fumigatus (strain ATCC MYA-4609 / CBS 101355 / FGSC A1100 / Af293) (Neosartorya fumigata), this protein is Lytic polysaccharide monooxygenase-like protein X325.